The primary structure comprises 776 residues: LPS-assembly protein LptD (776 aa).

An N-terminal signal peptide occupies residues 1 to 24 (MQHFSRTFLAASIATALFAPYAQA).

Belongs to the LptD family. In terms of assembly, component of the lipopolysaccharide transport and assembly complex. Interacts with LptE and LptA.

The protein localises to the cell outer membrane. Functionally, together with LptE, is involved in the assembly of lipopolysaccharide (LPS) at the surface of the outer membrane. In Vibrio vulnificus (strain CMCP6), this protein is LPS-assembly protein LptD.